We begin with the raw amino-acid sequence, 161 residues long: Endoribonuclease YbeY (161 aa).

Positions 120, 124, and 130 each coordinate Zn(2+).

This sequence belongs to the endoribonuclease YbeY family. Requires Zn(2+) as cofactor.

Its subcellular location is the cytoplasm. Single strand-specific metallo-endoribonuclease involved in late-stage 70S ribosome quality control and in maturation of the 3' terminus of the 16S rRNA. The polypeptide is Endoribonuclease YbeY (Chlamydia trachomatis serovar A (strain ATCC VR-571B / DSM 19440 / HAR-13)).